The sequence spans 327 residues: Phenylalanine--tRNA ligase alpha subunit (327 aa).

Glutamate 252 serves as a coordination point for Mg(2+).

The protein belongs to the class-II aminoacyl-tRNA synthetase family. Phe-tRNA synthetase alpha subunit type 1 subfamily. As to quaternary structure, tetramer of two alpha and two beta subunits. Requires Mg(2+) as cofactor.

Its subcellular location is the cytoplasm. The catalysed reaction is tRNA(Phe) + L-phenylalanine + ATP = L-phenylalanyl-tRNA(Phe) + AMP + diphosphate + H(+). The polypeptide is Phenylalanine--tRNA ligase alpha subunit (Haemophilus ducreyi (strain 35000HP / ATCC 700724)).